We begin with the raw amino-acid sequence, 145 residues long: UPF0201 protein Saci_1285 (145 aa).

Belongs to the UPF0201 family.

The protein is UPF0201 protein Saci_1285 of Sulfolobus acidocaldarius (strain ATCC 33909 / DSM 639 / JCM 8929 / NBRC 15157 / NCIMB 11770).